Reading from the N-terminus, the 108-residue chain is Probable chaperone-like protein YdbL (108 aa).

The signal sequence occupies residues 1–21 (MKKTLLLCAFLVGLVSSNVMA).

The protein resides in the periplasm. Probably acts as a chaperone-like protein that contributes to, but is not required for, the formation of the YdbH-YnbE intermembrane bridge. Affects the function and the structure of the YdbH-YnbE complex. Overexpression of ydbL causes a negative effect on YdbH-YnbE function. This chain is Probable chaperone-like protein YdbL (ydbL), found in Escherichia coli (strain K12).